The following is a 277-amino-acid chain: Large ribosomal subunit protein uL2 (277 aa).

Positions 211-277 (SRWKGVRPTV…KLIVRGRKKK (67 aa)) are disordered.

The protein belongs to the universal ribosomal protein uL2 family. In terms of assembly, part of the 50S ribosomal subunit. Forms a bridge to the 30S subunit in the 70S ribosome.

One of the primary rRNA binding proteins. Required for association of the 30S and 50S subunits to form the 70S ribosome, for tRNA binding and peptide bond formation. It has been suggested to have peptidyltransferase activity; this is somewhat controversial. Makes several contacts with the 16S rRNA in the 70S ribosome. The chain is Large ribosomal subunit protein uL2 from Staphylococcus epidermidis (strain ATCC 35984 / DSM 28319 / BCRC 17069 / CCUG 31568 / BM 3577 / RP62A).